Consider the following 329-residue polypeptide: Phenylalanine--tRNA ligase alpha subunit (329 aa).

The protein belongs to the class-II aminoacyl-tRNA synthetase family. Phe-tRNA synthetase alpha subunit type 1 subfamily. Tetramer of two alpha and two beta subunits. Mg(2+) is required as a cofactor.

It is found in the cytoplasm. It carries out the reaction tRNA(Phe) + L-phenylalanine + ATP = L-phenylalanyl-tRNA(Phe) + AMP + diphosphate + H(+). The chain is Phenylalanine--tRNA ligase alpha subunit (pheS) from Buchnera aphidicola subsp. Schizaphis graminum (strain Sg).